A 529-amino-acid polypeptide reads, in one-letter code: Amino acid transporter heavy chain SLC3A2 (529 aa).

Positions 1 to 20 (MSQDTEVDMKEVELNELEPE) are disordered. The Cytoplasmic portion of the chain corresponds to 1-84 (MSQDTEVDMK…SPGWVRTRWA (84 aa)). Serine 2 is subject to Phosphoserine. A Phosphothreonine modification is found at threonine 5. The span at 7 to 20 (VDMKEVELNELEPE) shows a compositional bias: basic and acidic residues. Lysine 49 participates in a covalent cross-link: Glycyl lysine isopeptide (Lys-Gly) (interchain with G-Cter in ubiquitin). Serine 65 carries the phosphoserine modification. A Glycyl lysine isopeptide (Lys-Gly) (interchain with G-Cter in SUMO2) cross-link involves residue lysine 66. Residues 85-105 (LLLLFWLGWIGMLAGAVVIIV) traverse the membrane as a helical; Signal-anchor for type II membrane protein segment. Topologically, residues 106–529 (RAPRCRELPV…GLLLHFPYVA (424 aa)) are extracellular. The N-linked (GlcNAc...) asparagine glycan is linked to asparagine 266. A phosphoserine mark is found at serine 307 and serine 309. N-linked (GlcNAc...) asparagine glycosylation is found at asparagine 325 and asparagine 405. Position 426 is a phosphoserine (serine 426).

Belongs to the SLC3A transporter family. In terms of assembly, disulfide-linked heterodimer with a non-glycosylated light chain (SLC7A5, SLC7A6, SLC7A7, SLC7A8, SLC7A10 or SLC7A11). Interacts with TLCD3A/CT120 and ICAM1. Constitutively and specifically associates with beta-1 integrins (alpha-2/beta-1, alpha-3/beta-1, alpha-5/beta-1 and alpha-6/beta-1), but minimally with alpha-4/beta-1. Interacts with LAPTM4B; recruits SLC3A2 and SLC7A5 to lysosomes to promote leucine uptake into these organelles and is required for mTORC1 activation. Post-translationally, phosphorylation on Ser-307 or Ser-309 and on Ser-426 by ecto-protein kinases favors heterotypic cell-cell interactions. In terms of processing, N-glycosylated; N-glycosylation is crucial for trafficking and stability of SLC3A2 to the plasma membrane.

It is found in the apical cell membrane. It localises to the cell membrane. The protein resides in the cell junction. The protein localises to the lysosome membrane. Its subcellular location is the melanosome. It is found in the basolateral cell membrane. Functionally, acts as a chaperone that facilitates biogenesis and trafficking of functional transporters heterodimers to the plasma membrane. Forms heterodimer with SLC7 family transporters (SLC7A5, SLC7A6, SLC7A7, SLC7A8, SLC7A10 and SLC7A11), a group of amino-acid antiporters. Heterodimers function as amino acids exchangers, the specificity of the substrate depending on the SLC7A subunit. Heterodimers formed by SLC3A2/SLC7A6 or SLC3A2/SLC7A7 mediate the uptake of dibasic amino acids. Heterodimer SLC3A2/SLC7A11 functions as an antiporter by mediating the exchange of extracellular anionic L-cystine and intracellular L-glutamate across the cellular plasma membrane. SLC3A2/SLC7A10 translocates small neutral L- and D-amino acids across the plasma membrane. SLC3A2/SLC75 or SLC3A2/SLC7A8 translocates neutral amino acids with broad specificity, thyroid hormones and L-DOPA. SLC3A2 is essential for plasma membrane localization, stability, and the transport activity of SLC7A5 and SLC7A8. When associated with LAPTM4B, the heterodimer SLC7A5 is recruited to lysosomes to promote leucine uptake into these organelles, and thereby mediates mTORC1 activation. Modulates integrin-related signaling and is essential for integrin-dependent cell spreading, migration and tumor progression. This chain is Amino acid transporter heavy chain SLC3A2, found in Oryctolagus cuniculus (Rabbit).